The following is a 223-amino-acid chain: Small ribosomal subunit protein uS3 (223 aa).

The KH type-2 domain maps to 39–115 (IRKYIEKNLA…RVFINIVEIK (77 aa)).

It belongs to the universal ribosomal protein uS3 family. As to quaternary structure, part of the 30S ribosomal subunit. Forms a tight complex with proteins S10 and S14.

In terms of biological role, binds the lower part of the 30S subunit head. Binds mRNA in the 70S ribosome, positioning it for translation. In Leuconostoc citreum (strain KM20), this protein is Small ribosomal subunit protein uS3.